A 97-amino-acid chain; its full sequence is MKRICSIYRSPKRNEMYLYVLKSDVLKRVPPELLVAFGKPVHAFDLVLSPERALSREDINAVLKNLDSQGYHLQMPPAEDEYIEHLPEELLRRNDPM.

Residues 3-87 (RICSIYRSPK…AEDEYIEHLP (85 aa)) form the YcgL domain.

This Pseudomonas syringae pv. tomato (strain ATCC BAA-871 / DC3000) protein is YcgL domain-containing protein PSPTO_3921.